The following is a 425-amino-acid chain: Riboflavin biosynthesis protein RibBA (425 aa).

A DHBP synthase region spans residues 1–204; sequence MTRLDSVERA…IADLIEWRRK (204 aa). D-ribulose 5-phosphate is bound by residues 28 to 29, D33, 141 to 145, and E165; these read RE and RPGHT. E29 provides a ligand contact to Mg(2+). H144 contacts Mg(2+). Positions 205 to 425 are GTP cyclohydrolase II; that stretch reads HEKHIERVAE…HLPGEFGGAL (221 aa). Residue 259–263 participates in GTP binding; sequence RVHSE. Residues C264, C275, and C277 each contribute to the Zn(2+) site. GTP contacts are provided by residues Q280, 303 to 305, and T325; that span reads EGR. D337 serves as the catalytic Proton acceptor; for GTP cyclohydrolase activity. R339 (nucleophile; for GTP cyclohydrolase activity) is an active-site residue. 2 residues coordinate GTP: T360 and K365.

The protein in the N-terminal section; belongs to the DHBP synthase family. This sequence in the C-terminal section; belongs to the GTP cyclohydrolase II family. Mg(2+) is required as a cofactor. The cofactor is Mn(2+). Zn(2+) serves as cofactor.

The enzyme catalyses D-ribulose 5-phosphate = (2S)-2-hydroxy-3-oxobutyl phosphate + formate + H(+). It catalyses the reaction GTP + 4 H2O = 2,5-diamino-6-hydroxy-4-(5-phosphoribosylamino)-pyrimidine + formate + 2 phosphate + 3 H(+). It functions in the pathway cofactor biosynthesis; riboflavin biosynthesis; 2-hydroxy-3-oxobutyl phosphate from D-ribulose 5-phosphate: step 1/1. The protein operates within cofactor biosynthesis; riboflavin biosynthesis; 5-amino-6-(D-ribitylamino)uracil from GTP: step 1/4. Catalyzes the conversion of D-ribulose 5-phosphate to formate and 3,4-dihydroxy-2-butanone 4-phosphate. Functionally, catalyzes the conversion of GTP to 2,5-diamino-6-ribosylamino-4(3H)-pyrimidinone 5'-phosphate (DARP), formate and pyrophosphate. In Mycobacterium bovis (strain ATCC BAA-935 / AF2122/97), this protein is Riboflavin biosynthesis protein RibBA.